The sequence spans 306 residues: tRNA pseudouridine synthase B (306 aa).

D43 acts as the Nucleophile in catalysis.

This sequence belongs to the pseudouridine synthase TruB family. Type 1 subfamily.

It carries out the reaction uridine(55) in tRNA = pseudouridine(55) in tRNA. In terms of biological role, responsible for synthesis of pseudouridine from uracil-55 in the psi GC loop of transfer RNAs. This Heliobacterium modesticaldum (strain ATCC 51547 / Ice1) protein is tRNA pseudouridine synthase B.